A 98-amino-acid polypeptide reads, in one-letter code: Small ribosomal subunit protein uS17 (98 aa).

This sequence belongs to the universal ribosomal protein uS17 family. In terms of assembly, part of the 30S ribosomal subunit.

Its function is as follows. One of the primary rRNA binding proteins, it binds specifically to the 5'-end of 16S ribosomal RNA. The protein is Small ribosomal subunit protein uS17 of Carboxydothermus hydrogenoformans (strain ATCC BAA-161 / DSM 6008 / Z-2901).